The primary structure comprises 389 residues: Putative DNA processing protein DprA (389 aa).

The protein belongs to the DprA/Smf family.

In terms of biological role, may help load RecA onto ssDNA. This Mycobacterium tuberculosis (strain CDC 1551 / Oshkosh) protein is Putative DNA processing protein DprA.